The following is a 422-amino-acid chain: Enolase (422 aa).

Gln-162 contributes to the (2R)-2-phosphoglycerate binding site. The active-site Proton donor is the Glu-204. Mg(2+) contacts are provided by Asp-241, Glu-284, and Asp-311. 4 residues coordinate (2R)-2-phosphoglycerate: Lys-336, Arg-365, Ser-366, and Lys-387. Lys-336 (proton acceptor) is an active-site residue.

The protein belongs to the enolase family. As to quaternary structure, component of the RNA degradosome, a multiprotein complex involved in RNA processing and mRNA degradation. The cofactor is Mg(2+).

It localises to the cytoplasm. It is found in the secreted. Its subcellular location is the cell surface. It catalyses the reaction (2R)-2-phosphoglycerate = phosphoenolpyruvate + H2O. It functions in the pathway carbohydrate degradation; glycolysis; pyruvate from D-glyceraldehyde 3-phosphate: step 4/5. Catalyzes the reversible conversion of 2-phosphoglycerate (2-PG) into phosphoenolpyruvate (PEP). It is essential for the degradation of carbohydrates via glycolysis. This Legionella pneumophila (strain Lens) protein is Enolase.